We begin with the raw amino-acid sequence, 412 residues long: Putative phosphate permease PF1020 (412 aa).

The next 10 helical transmembrane spans lie at 7–27, 50–70, 88–108, 119–139, 143–163, 187–207, 213–233, 298–318, 335–355, and 384–404; these read MLAD…AWAI, AVII…KTVT, VLIF…VIAT, SIIG…IVNW, IKVV…AYLV, FWIG…VLHG, GFLK…SLIL, WILA…GYKV, FTID…GMPI, and DIII…GIIF.

This sequence belongs to the inorganic phosphate transporter (PiT) (TC 2.A.20) family.

The protein resides in the cell membrane. Its function is as follows. Potential transporter for phosphate. The protein is Putative phosphate permease PF1020 of Pyrococcus furiosus (strain ATCC 43587 / DSM 3638 / JCM 8422 / Vc1).